The sequence spans 251 residues: Long tail fiber protein Gp37 (251 aa).

The interaction with the receptor-recognizing protein gp38 stretch occupies residues 134 to 137; the sequence is DVYI. Residues 139–237 form the Peptidase S74 domain; the sequence is SDGRLKINKK…EEIKELKTPL (99 aa).

It belongs to the S16-like long tail fiber protein Gp37 family. As to quaternary structure, homotrimer. Interacts with the receptor-recognizing protein Gp38. In terms of processing, proteolytic cleavage and release of the chaperone in the host cytosol stabilizes the folded protein.

Its subcellular location is the virion. In terms of biological role, constitues the trimeric tip of the long tail fiber that mediates the attachment to the host receptor, together with the receptor-recognizing protein Gp38. Functionally, the C-terminal chaperone protein mediates homotrimerization and proper folding of the catalytic trimer. This chain is Long tail fiber protein Gp37 (37), found in Selenomonas ruminantium (Bacteriophage M1).